A 376-amino-acid polypeptide reads, in one-letter code: Pyrimidine monooxygenase RutA (376 aa).

FMN-binding positions include 61–62, Asn127, Glu136, 152–153, and Ser202; these read IK and RY.

Belongs to the NtaA/SnaA/DszA monooxygenase family. RutA subfamily.

It catalyses the reaction uracil + FMNH2 + NADH + O2 = (Z)-3-ureidoacrylate + FMN + NAD(+) + H2O + H(+). The enzyme catalyses thymine + FMNH2 + NADH + O2 = (Z)-2-methylureidoacrylate + FMN + NAD(+) + H2O + H(+). In terms of biological role, catalyzes the pyrimidine ring opening between N-3 and C-4 by an unusual flavin hydroperoxide-catalyzed mechanism, adding oxygen atoms in the process to yield ureidoacrylate peracid, that immediately reacts with FMN forming ureidoacrylate and FMN-N(5)-oxide. The FMN-N(5)-oxide reacts spontaneously with NADH to produce FMN. Requires the flavin reductase RutF to regenerate FMN in vivo. In Methylorubrum populi (strain ATCC BAA-705 / NCIMB 13946 / BJ001) (Methylobacterium populi), this protein is Pyrimidine monooxygenase RutA.